The chain runs to 189 residues: Elongation factor P (189 aa).

Residue Lys-34 is modified to N6-(3,6-diaminohexanoyl)-5-hydroxylysine.

The protein belongs to the elongation factor P family. Post-translationally, may be beta-lysylated on the epsilon-amino group of Lys-34 by the combined action of EpmA and EpmB, and then hydroxylated on the C5 position of the same residue by EpmC (if this protein is present). Lysylation is critical for the stimulatory effect of EF-P on peptide-bond formation. The lysylation moiety may extend toward the peptidyltransferase center and stabilize the terminal 3-CCA end of the tRNA. Hydroxylation of the C5 position on Lys-34 may allow additional potential stabilizing hydrogen-bond interactions with the P-tRNA.

It localises to the cytoplasm. It participates in protein biosynthesis; polypeptide chain elongation. In terms of biological role, involved in peptide bond synthesis. Alleviates ribosome stalling that occurs when 3 or more consecutive Pro residues or the sequence PPG is present in a protein, possibly by augmenting the peptidyl transferase activity of the ribosome. Modification of Lys-34 is required for alleviation. The chain is Elongation factor P from Francisella philomiragia subsp. philomiragia (strain ATCC 25017 / CCUG 19701 / FSC 153 / O#319-036).